We begin with the raw amino-acid sequence, 196 residues long: Carnitine operon protein CaiE (196 aa).

The segment at 173-196 (TQPLRQMEENRPRLQGTTDVTPKR) is disordered. Positions 187 to 196 (QGTTDVTPKR) are enriched in polar residues.

The protein belongs to the transferase hexapeptide repeat family.

It participates in amine and polyamine metabolism; carnitine metabolism. Functionally, overproduction of CaiE stimulates the activity of CaiB and CaiD. The polypeptide is Carnitine operon protein CaiE (Escherichia coli O7:K1 (strain IAI39 / ExPEC)).